A 198-amino-acid polypeptide reads, in one-letter code: Recombination protein RecR (198 aa).

The C4-type zinc finger occupies 57 to 72; the sequence is CSLCGNLDTVDPCHIC. The 96-residue stretch at 80 to 175 folds into the Toprim domain; the sequence is GLICVVETVG…TVTRVGHGVP (96 aa).

Belongs to the RecR family.

Functionally, may play a role in DNA repair. It seems to be involved in an RecBC-independent recombinational process of DNA repair. It may act with RecF and RecO. This is Recombination protein RecR from Gluconobacter oxydans (strain 621H) (Gluconobacter suboxydans).